We begin with the raw amino-acid sequence, 743 residues long: Putative pre-mRNA-splicing factor ATP-dependent RNA helicase DHX32 (743 aa).

N-acetylmethionine is present on Met-1. Positions 1–28 (MEEEGLECPNSSSEKRYFPESLDSSDGD) are disordered. The Helicase ATP-binding domain occupies 72-238 (MENLLQNQIV…YGNVPVIEVK (167 aa)). 85-92 (GDAKCGKS) contributes to the ATP binding site. The DEAH box signature appears at 185–188 (DDIH).

Belongs to the DEAD box helicase family. DEAH subfamily. As to expression, expressed in lymphoid tissues (at protein level). Expressed in brain, heart, skeletal muscle, colon, thymus, spleen, kidney, liver, small intestine, placenta, lung, lymphoid tissues and blood leukocytes.

The protein localises to the nucleus. It localises to the mitochondrion. The enzyme catalyses ATP + H2O = ADP + phosphate + H(+). The chain is Putative pre-mRNA-splicing factor ATP-dependent RNA helicase DHX32 (DHX32) from Homo sapiens (Human).